A 92-amino-acid chain; its full sequence is Small ribosomal subunit protein uS19 (92 aa).

It belongs to the universal ribosomal protein uS19 family.

In terms of biological role, protein S19 forms a complex with S13 that binds strongly to the 16S ribosomal RNA. This Synechocystis sp. (strain ATCC 27184 / PCC 6803 / Kazusa) protein is Small ribosomal subunit protein uS19 (rpsS).